The primary structure comprises 430 residues: Adenylosuccinate synthetase (430 aa).

GTP contacts are provided by residues 12 to 18 (GDEGKGK) and 40 to 42 (GHT). Aspartate 13 functions as the Proton acceptor in the catalytic mechanism. Positions 13 and 40 each coordinate Mg(2+). IMP contacts are provided by residues 13–16 (DEGK), 38–41 (NAGH), threonine 130, arginine 144, glutamine 224, threonine 239, and arginine 303. The active-site Proton donor is histidine 41. 299 to 305 (VVTGRKR) is a substrate binding site. GTP is bound by residues arginine 305, 331 to 333 (KLD), and 413 to 415 (STS).

The protein belongs to the adenylosuccinate synthetase family. Homodimer. Mg(2+) is required as a cofactor.

The protein resides in the cytoplasm. The catalysed reaction is IMP + L-aspartate + GTP = N(6)-(1,2-dicarboxyethyl)-AMP + GDP + phosphate + 2 H(+). It participates in purine metabolism; AMP biosynthesis via de novo pathway; AMP from IMP: step 1/2. Functionally, plays an important role in the de novo pathway of purine nucleotide biosynthesis. Catalyzes the first committed step in the biosynthesis of AMP from IMP. This is Adenylosuccinate synthetase from Methylobacterium nodulans (strain LMG 21967 / CNCM I-2342 / ORS 2060).